The sequence spans 1076 residues: Atos homolog protein A (1076 aa).

Residues 24-32 (ALLITEGRT) form a transactivation domain 1 (TAD1) region. Disordered stretches follow at residues 700 to 721 (ESMS…TQLN) and 739 to 765 (SDQL…QRRS). Residues 739–754 (SDQLKNEQDKQEDPTN) are compositionally biased toward basic and acidic residues. A required for macropage invasion region spans residues 878 to 935 (LLGNFEESVLNYRFDPLGIVDGFTAEVGASGAFCPTHLTLPVEVSFYSVSDDNAPSPY). The transactivation domain 2 (TAD2) stretch occupies residues 962–970 (FNPNKTVVK).

The protein belongs to the ATOS family.

It localises to the nucleus. In terms of biological role, transcription regulator that syncronizes transcriptional and translational programs to promote macrophage invasion of tissues. The chain is Atos homolog protein A from Homo sapiens (Human).